Reading from the N-terminus, the 282-residue chain is Small ribosomal subunit protein uS2 (282 aa).

Positions 245–265 are disordered; the sequence is AEEAVEELPLPTGEAQDEASS.

The protein belongs to the universal ribosomal protein uS2 family.

This Chlamydia trachomatis serovar A (strain ATCC VR-571B / DSM 19440 / HAR-13) protein is Small ribosomal subunit protein uS2.